A 74-amino-acid chain; its full sequence is ATP synthase subunit c (74 aa).

The next 2 membrane-spanning stretches (helical) occupy residues 5–25 (LAYIGAGLAGMGTGIAALGVG) and 49–69 (LFIGIAFAEALGIFSFLVALL).

Belongs to the ATPase C chain family. F-type ATPases have 2 components, F(1) - the catalytic core - and F(0) - the membrane proton channel. F(1) has five subunits: alpha(3), beta(3), gamma(1), delta(1), epsilon(1). F(0) has three main subunits: a(1), b(2) and c(10-14). The alpha and beta chains form an alternating ring which encloses part of the gamma chain. F(1) is attached to F(0) by a central stalk formed by the gamma and epsilon chains, while a peripheral stalk is formed by the delta and b chains.

Its subcellular location is the cell inner membrane. Its function is as follows. F(1)F(0) ATP synthase produces ATP from ADP in the presence of a proton or sodium gradient. F-type ATPases consist of two structural domains, F(1) containing the extramembraneous catalytic core and F(0) containing the membrane proton channel, linked together by a central stalk and a peripheral stalk. During catalysis, ATP synthesis in the catalytic domain of F(1) is coupled via a rotary mechanism of the central stalk subunits to proton translocation. Key component of the F(0) channel; it plays a direct role in translocation across the membrane. A homomeric c-ring of between 10-14 subunits forms the central stalk rotor element with the F(1) delta and epsilon subunits. The sequence is that of ATP synthase subunit c from Ruegeria sp. (strain TM1040) (Silicibacter sp.).